Consider the following 493-residue polypeptide: Cobyric acid synthase (493 aa).

Residues 255–441 enclose the GATase cobBQ-type domain; sequence ELEIAVLRLP…LHGLLENGRW (187 aa). The Nucleophile role is filled by C336. Residue H433 is part of the active site.

It belongs to the CobB/CobQ family. CobQ subfamily.

It participates in cofactor biosynthesis; adenosylcobalamin biosynthesis. Functionally, catalyzes amidations at positions B, D, E, and G on adenosylcobyrinic A,C-diamide. NH(2) groups are provided by glutamine, and one molecule of ATP is hydrogenolyzed for each amidation. The chain is Cobyric acid synthase from Synechococcus sp. (strain RCC307).